A 1102-amino-acid chain; its full sequence is Carbamoyl phosphate synthase large chain (1102 aa).

The interval Met1–Glu408 is carboxyphosphate synthetic domain. ATP-binding residues include Arg129, Arg175, Gly181, Gly182, Glu214, Ile216, Glu221, Gly247, Val248, His249, Gln291, and Glu305. In terms of domain architecture, ATP-grasp 1 spans Glu137–Val334. Residues Gln291, Glu305, and Asn307 each contribute to the Mg(2+) site. Gln291, Glu305, and Asn307 together coordinate Mn(2+). The segment at Lys409–Ser551 is oligomerization domain. Residues Glu552–Tyr954 form a carbamoyl phosphate synthetic domain region. In terms of domain architecture, ATP-grasp 2 spans Gly682–Leu873. ATP contacts are provided by Arg718, Arg757, Leu759, Glu764, Gly789, Ile790, His791, Ser792, Gln832, and Glu844. Positions 832, 844, and 846 each coordinate Mg(2+). Gln832, Glu844, and Asn846 together coordinate Mn(2+). Residues Gly955–Ala1100 enclose the MGS-like domain. An allosteric domain region spans residues Gly955–Asp1102.

Belongs to the CarB family. In terms of assembly, composed of two chains; the small (or glutamine) chain promotes the hydrolysis of glutamine to ammonia, which is used by the large (or ammonia) chain to synthesize carbamoyl phosphate. Tetramer of heterodimers (alpha,beta)4. Requires Mg(2+) as cofactor. Mn(2+) is required as a cofactor.

The enzyme catalyses hydrogencarbonate + L-glutamine + 2 ATP + H2O = carbamoyl phosphate + L-glutamate + 2 ADP + phosphate + 2 H(+). It carries out the reaction hydrogencarbonate + NH4(+) + 2 ATP = carbamoyl phosphate + 2 ADP + phosphate + 2 H(+). It functions in the pathway amino-acid biosynthesis; L-arginine biosynthesis; carbamoyl phosphate from bicarbonate: step 1/1. Its pathway is pyrimidine metabolism; UMP biosynthesis via de novo pathway; (S)-dihydroorotate from bicarbonate: step 1/3. Its function is as follows. Large subunit of the glutamine-dependent carbamoyl phosphate synthetase (CPSase). CPSase catalyzes the formation of carbamoyl phosphate from the ammonia moiety of glutamine, carbonate, and phosphate donated by ATP, constituting the first step of 2 biosynthetic pathways, one leading to arginine and/or urea and the other to pyrimidine nucleotides. The large subunit (synthetase) binds the substrates ammonia (free or transferred from glutamine from the small subunit), hydrogencarbonate and ATP and carries out an ATP-coupled ligase reaction, activating hydrogencarbonate by forming carboxy phosphate which reacts with ammonia to form carbamoyl phosphate. This chain is Carbamoyl phosphate synthase large chain, found in Streptomyces griseus subsp. griseus (strain JCM 4626 / CBS 651.72 / NBRC 13350 / KCC S-0626 / ISP 5235).